Here is a 1561-residue protein sequence, read N- to C-terminus: Formin-E (1561 aa).

Residues 1–28 show a composition bias toward low complexity; the sequence is MDNHSSSSNPSSLSSSSSSSSSSSSFLS. Disordered stretches follow at residues 1–63, 77–187, 211–279, and 305–365; these read MDNH…EEKP, EEEE…GKLS, PIIV…SSED, and ILRS…NLNY. The segment covering 29–51 has biased composition (basic and acidic residues); the sequence is DHVKKEEQNGLDTIKEEIENKIE. The stretch at 32–85 forms a coiled coil; sequence KKEEQNGLDTIKEEIENKIENEEEEEKIEEKPIEKVEEEKIIVQKEEEEKIEEE. Residues 80 to 89 are compositionally biased toward acidic residues; that stretch reads EKIEEEPIEK. The span at 103 to 120 shows a compositional bias: polar residues; that stretch reads DNINTTVEAKTLETSTEP. Residues 158-208 are a coiled coil; sequence EQQEQQEKQKEETKPSIREEVKEKIKGKLSEIKEEIKDIKEEIKHVIREEV. A compositionally biased stretch (basic and acidic residues) spans 162–187; the sequence is QQEKQKEETKPSIREEVKEKIKGKLS. Pro residues predominate over residues 220–229; it reads SPPPPPPPPS. Over residues 230–258 the composition is skewed to low complexity; the sequence is ITVQSSSPVSSQISSPVSSPVSSPKPSVT. Residues 305-320 are compositionally biased toward polar residues; it reads ILRSKSSPNPGANNPN. The segment covering 326 to 365 has biased composition (low complexity); the sequence is NNSSSSSSSNNNSDNNNNSDNNSNNNNINNNNSSSNNLNY. A Phorbol-ester/DAG-type zinc finger spans residues 379-427; sequence YHDFKIHRGTSSCVYCGENTRLWSTSYKCFFCGVVCHKKCLDSMNTIPC. Positions 465-534 are enriched in low complexity; that stretch reads PSSITNSSSK…TSISSPPIAS (70 aa). A disordered region spans residues 465–549; sequence PSSITNSSSK…PLLQQQQQQQ (85 aa). Positions 541-573 form a coiled coil; that stretch reads LLQQQQQQQQQQQQQQQQQQQQQQQQQQISTTQ. Residues 581-929 form the GBD/FH3 domain; it reads SEKPDDDMIN…QISLHKGGFE (349 aa). Residues 952–989 adopt a coiled-coil conformation; that stretch reads LNRKLGELEKQNIDKAMKIQEQDINIKSLLDLLKQLKD. 3 disordered regions span residues 1009-1092, 1466-1508, and 1526-1561; these read MEPP…VPKP, EEKR…SDED, and RQAK…PNKN. A compositionally biased stretch (low complexity) spans 1017-1033; that stretch reads SVKSPDDPNNAAPIVVA. The FH1 domain maps to 1019–1081; that stretch reads KSPDDPNNAA…LGAKKPPAGV (63 aa). Over residues 1034–1070 the composition is skewed to pro residues; it reads PIPPPPPPISGAPPPPPPPPPPMKGGAGPPPPPPPPG. Positions 1071–1081 are enriched in low complexity; the sequence is KLGAKKPPAGV. Residues 1086–1475 enclose the FH2 domain; that stretch reads PPKVPKPSHP…EEKRLQQKQQ (390 aa). Positions 1398–1491 form a coiled coil; it reads LATASTEVEK…RKLTTSNESA (94 aa). The segment covering 1466–1481 has biased composition (basic and acidic residues); the sequence is EEKRLQQKQQRQERAV. Polar residues-rich tracts occupy residues 1484-1498 and 1536-1561; these read LTTS…PNHA and HQIA…PNKN. The DAD domain occupies 1488-1518; that stretch reads NESASASPNHAKSTDDKSDEDDDIVNDLLMA.

It belongs to the formin homology family. Diaphanous subfamily. As to quaternary structure, interacts (via GBD/FH3 domain) with activated Rho-GTPases.

Functionally, formins play an important role in the nucleation of actin and the formation of linear actin filaments. This is Formin-E (forE) from Dictyostelium discoideum (Social amoeba).